The primary structure comprises 567 residues: Diacylglycerol kinase epsilon (567 aa).

A helical membrane pass occupies residues 22 to 42 (LILWTLCSVLLPVFITFWCSL). Phorbol-ester/DAG-type zinc fingers lie at residues 59 to 108 (KHGW…RFQC) and 124 to 177 (PHHW…NEKC). One can recognise a DAGKc domain in the interval 215–356 (KQWTPLIILA…LDRWKVQVTN (142 aa)).

It belongs to the eukaryotic diacylglycerol kinase family. In terms of tissue distribution, expressed predominantly in testis. Expressed in endothelium, platelets and podocytes (at protein level).

The protein resides in the membrane. It localises to the cytoplasm. It catalyses the reaction a 1,2-diacyl-sn-glycerol + ATP = a 1,2-diacyl-sn-glycero-3-phosphate + ADP + H(+). The catalysed reaction is 1-hexadecanoyl-2-(5Z,8Z,11Z,14Z-eicosatetraenoyl)-sn-glycerol + ATP = 1-hexadecanoyl-2-(5Z,8Z,11Z,14Z-eicosatetraenoyl)-sn-glycero-3-phosphate + ADP + H(+). The enzyme catalyses 1-octadecanoyl-2-(5Z,8Z,11Z,14Z-eicosatetraenoyl)-sn-glycerol + ATP = 1-octadecanoyl-2-(5Z,8Z,11Z,14Z-eicosatetraenoyl)-sn-glycero-3-phosphate + ADP + H(+). It carries out the reaction 1-eicosanoyl-2-(5Z,8Z,11Z,14Z)-eicosatetraenoyl-sn-glycerol + ATP = 1-eicosanoyl-2-(5Z,8Z,11Z,14Z)-eicosatetraenoyl-sn-glycero-3-phosphate + ADP + H(+). It catalyses the reaction 1,2-di-(5Z,8Z,11Z,14Z)-eicosatetraenoyl-sn-glycerol + ATP = 1,2-di-(5Z,8Z,11Z,14Z)-eicosatetraenoyl-sn-glycero-3-phosphate + ADP + H(+). The catalysed reaction is 1-octadecanoyl-2-(9Z,12Z)-octadecadienoyl-sn-glycerol + ATP = 1-octadecanoyl-2-(9Z,12Z-octadecadienoyl)-sn-glycero-3-phosphate + ADP + H(+). The enzyme catalyses 1,2-di-(9Z,12Z-octadecadienoyl)-sn-glycerol + ATP = 1,2-di-(9Z,12Z-octadecadienoyl)-sn-glycero-3-phosphate + ADP + H(+). It carries out the reaction 1,2-di-(9Z-octadecenoyl)-sn-glycerol + ATP = 1,2-di-(9Z-octadecenoyl)-sn-glycero-3-phosphate + ADP + H(+). Its pathway is lipid metabolism; glycerolipid metabolism. With respect to regulation, undergoes competitive inhibition by its own product 1,2-diacyl-sn-glycero-3-phosphate/phosphatidic acid. The strongest inhibition being observed in vitro with 1-octadecanoyl-2-(5Z,8Z,11Z,14Z-eicosatetraenoyl)-sn-glycero-3-phosphate, a major intermediate in the phosphatidylinositol turnover cycle and more generally by diacylglycerols with an arachidonoyl acyl chain at the sn-2 position. Membrane-bound diacylglycerol kinase that converts diacylglycerol/DAG into phosphatidic acid/phosphatidate/PA and regulates the respective levels of these two bioactive lipids. Thereby, acts as a central switch between the signaling pathways activated by these second messengers with different cellular targets and opposite effects in numerous biological processes. Also plays an important role in the biosynthesis of complex lipids. Displays specificity for diacylglycerol substrates with an arachidonoyl acyl chain at the sn-2 position, with the highest activity toward 1-octadecanoyl-2-(5Z,8Z,11Z,14Z-eicosatetraenoyl)-sn-glycerol the main diacylglycerol intermediate within the phosphatidylinositol turnover cycle. Can also phosphorylate diacylglycerol substrates with a linoleoyl acyl chain at the sn-2 position but much less efficiently. This chain is Diacylglycerol kinase epsilon (DGKE), found in Homo sapiens (Human).